Here is a 123-residue protein sequence, read N- to C-terminus: Ribosome-binding factor A (123 aa).

It belongs to the RbfA family. Monomer. Binds 30S ribosomal subunits, but not 50S ribosomal subunits or 70S ribosomes.

The protein localises to the cytoplasm. One of several proteins that assist in the late maturation steps of the functional core of the 30S ribosomal subunit. Associates with free 30S ribosomal subunits (but not with 30S subunits that are part of 70S ribosomes or polysomes). Required for efficient processing of 16S rRNA. May interact with the 5'-terminal helix region of 16S rRNA. The chain is Ribosome-binding factor A from Koribacter versatilis (strain Ellin345).